Here is a 156-residue protein sequence, read N- to C-terminus: Small ribosomal subunit protein uS7 (156 aa).

This sequence belongs to the universal ribosomal protein uS7 family. In terms of assembly, part of the 30S ribosomal subunit. Contacts proteins S9 and S11.

In terms of biological role, one of the primary rRNA binding proteins, it binds directly to 16S rRNA where it nucleates assembly of the head domain of the 30S subunit. Is located at the subunit interface close to the decoding center, probably blocks exit of the E-site tRNA. This chain is Small ribosomal subunit protein uS7, found in Allorhizobium ampelinum (strain ATCC BAA-846 / DSM 112012 / S4) (Agrobacterium vitis (strain S4)).